Reading from the N-terminus, the 325-residue chain is Protein ORANGE-GREEN, chloroplastic (325 aa).

A chloroplast-targeting transit peptide spans 1–54 (MDRVLVASYPINHLIRPHSFRIDYCWSTCFTSRLNSGKERQKLSSRWRWRSMAS). Residues 53–71 (ASDSTDSSSSSSFAPSVES) show a composition bias toward low complexity. Residues 53 to 77 (ASDSTDSSSSSSFAPSVESDPSDKT) form a disordered region. 2 helical membrane-spanning segments follow: residues 164 to 184 (LYYVTCYSLIAGIILFGGLLA) and 217 to 237 (IVASFSGGAVGVISALMVVEV). The interval 226–317 (VGVISALMVV…CTGMAMASEH (92 aa)) is CR-type-like. A CXXCXGXG motif repeat occupies 248-255 (CKYCLGTG). A CXXCXXXG motif repeat occupies 259 to 266 (CARCSNTG). The stretch at 292 to 299 (CQNCSGSG) is one CXXCXGXG motif repeat. Residues 303–310 (CPTCLCTG) form a CXXCXXXG motif repeat.

This sequence belongs to the orange-like family.

The protein localises to the plastid. The protein resides in the chloroplast membrane. Its function is as follows. Involved in chloroplast differentiation in fruit flesh. This Cucumis melo (Muskmelon) protein is Protein ORANGE-GREEN, chloroplastic.